A 277-amino-acid polypeptide reads, in one-letter code: Bifunctional protein FolD (277 aa).

NADP(+)-binding positions include 159-161 (GRS), Ser184, and Ile225.

The protein belongs to the tetrahydrofolate dehydrogenase/cyclohydrolase family. As to quaternary structure, homodimer.

The enzyme catalyses (6R)-5,10-methylene-5,6,7,8-tetrahydrofolate + NADP(+) = (6R)-5,10-methenyltetrahydrofolate + NADPH. It carries out the reaction (6R)-5,10-methenyltetrahydrofolate + H2O = (6R)-10-formyltetrahydrofolate + H(+). It participates in one-carbon metabolism; tetrahydrofolate interconversion. Catalyzes the oxidation of 5,10-methylenetetrahydrofolate to 5,10-methenyltetrahydrofolate and then the hydrolysis of 5,10-methenyltetrahydrofolate to 10-formyltetrahydrofolate. The chain is Bifunctional protein FolD from Acholeplasma laidlawii (strain PG-8A).